The following is a 519-amino-acid chain: Sugar transport protein MST5 (519 aa).

Over 1–18 the chain is Cytoplasmic; that stretch reads MAGGAMVQTVGGKTYPGK. Residues 19–39 traverse the membrane as a helical segment; it reads MTAFVFFTCLVASSGGLIFGY. Topologically, residues 40–80 are extracellular; that stretch reads DIGISGGVTSMDSFLSEFFPSVYAQAKASKDTNQYCKFDSQ. The helical transmembrane segment at 81–101 threads the bilayer; the sequence is LLTLFTSSLYLAALATSFVAA. The Cytoplasmic portion of the chain corresponds to 102–110; sequence WVTRVFGRK. A helical membrane pass occupies residues 111-127; it reads WSMFCGGVTFLAGSALN. Residue Gly128 is a topological domain, extracellular. Residues 129-149 traverse the membrane as a helical segment; that stretch reads AATDVMMLILGRILLGIGVGF. Topologically, residues 150–167 are cytoplasmic; that stretch reads ANQSVPLYLSEMAPANLR. A helical transmembrane segment spans residues 168 to 188; that stretch reads GMLNIGFQLMTTIGILSANLI. The Extracellular segment spans residues 189–202; it reads NYATSSIEGGWGWR. The chain crosses the membrane as a helical span at residues 203–223; it reads IGLGLAGVPALIITLGALVLP. The Cytoplasmic portion of the chain corresponds to 224 to 295; sequence DTPNSLIARG…IAILIPCFQQ (72 aa). The helical transmembrane segment at 296–316 threads the bilayer; that stretch reads LTGINVIMFYAPVLFLTIGFA. The Extracellular segment spans residues 317-321; it reads GDASL. A helical transmembrane segment spans residues 322-342; that stretch reads MSAVITGLVNMFATVVSIISV. Residues 343–357 lie on the Cytoplasmic side of the membrane; the sequence is DRLGRRVLFLQGGTQ. Residues 358-378 traverse the membrane as a helical segment; the sequence is MFISQVVVGTLIALQFGVAGV. Residues 379–386 are Extracellular-facing; the sequence is GEMSRSYA. A helical transmembrane segment spans residues 387 to 407; sequence ILLVLFICMYVAGFAWSWGPL. At 408–426 the chain is on the cytoplasmic side; the sequence is GWLVPSEVFALEIRSAGQS. The helical transmembrane segment at 427 to 447 threads the bilayer; that stretch reads IAVCVNMMLTFVIGQAFLTML. Topologically, residues 448–451 are extracellular; sequence CHLK. Residues 452–472 traverse the membrane as a helical segment; the sequence is FGLFYFFAGWMLVMTTFVALF. The Cytoplasmic portion of the chain corresponds to 473–519; it reads LPETKGVPIEEMNHVWSRHWFWGSYVTAHDVAGAGAGGGGNRRSHNV.

This sequence belongs to the major facilitator superfamily. Sugar transporter (TC 2.A.1.1) family. As to expression, expressed in panicles before heading. Expressed in flowers before pollination.

It localises to the membrane. Mediates active uptake of hexoses by sugar:proton symport. Can transport glucose, xylose and 3-O-methylglucose. May play a role at the early stage of seed development. This Oryza sativa subsp. japonica (Rice) protein is Sugar transport protein MST5.